The following is a 433-amino-acid chain: MNTSLQDLEQEILAAVRHEVVPALGCTEPICVALAAAIGRTHLSSAPEKIAVRVSGNLMKNAMGVTVPGTGMVGLSIAAAVGAIGGDAEAGLQTLKSISAEDVAAAKKMLADDAVSVSMADTDHIFYAEVTLTAGAEIARVCIADTHTNVVLIEKNGKTIYQKPVAAADEKNPVAVFTKITAKDVFDFATTVDLEKIRFIKEAATLNSALSQEGLRTDYGLHIGRSLQKNIGNGLLSDDLLNRIIIETGAASDARMGGASLPAMSNSGSGNQGIAATMPVVVVARHLKSSEEKTIRALFLSHALAIYIHAKLPTLSSLCAANTAAMGSAGACAWLFSERFEAVSDTICSMIGDVSGMICDGAANSCAMKVISSITSGYKSMLMALDNTRVTGFEGIVEHDLERSINNLCALARESMQHVDQQIIDIMVQKPMH.

Belongs to the UPF0597 family.

The polypeptide is UPF0597 protein DNO_0106 (Dichelobacter nodosus (strain VCS1703A)).